Here is a 353-residue protein sequence, read N- to C-terminus: Chorismate synthase (353 aa).

Residues Arg48 and Arg54 each contribute to the NADP(+) site. Residues 125-127 (RSS), 238-239 (NA), Gly278, 293-297 (KPTSS), and Arg319 each bind FMN.

It belongs to the chorismate synthase family. As to quaternary structure, homotetramer. Requires FMNH2 as cofactor.

It catalyses the reaction 5-O-(1-carboxyvinyl)-3-phosphoshikimate = chorismate + phosphate. It functions in the pathway metabolic intermediate biosynthesis; chorismate biosynthesis; chorismate from D-erythrose 4-phosphate and phosphoenolpyruvate: step 7/7. In terms of biological role, catalyzes the anti-1,4-elimination of the C-3 phosphate and the C-6 proR hydrogen from 5-enolpyruvylshikimate-3-phosphate (EPSP) to yield chorismate, which is the branch point compound that serves as the starting substrate for the three terminal pathways of aromatic amino acid biosynthesis. This reaction introduces a second double bond into the aromatic ring system. The chain is Chorismate synthase from Bordetella pertussis (strain Tohama I / ATCC BAA-589 / NCTC 13251).